Here is a 135-residue protein sequence, read N- to C-terminus: 6-pyruvoyl tetrahydrobiopterin synthase (135 aa).

Residue His17 participates in Zn(2+) binding. The active-site Proton acceptor is Cys36. Residues His40 and His42 each contribute to the Zn(2+) site. Residues His81 and Glu124 each act as charge relay system in the active site.

The protein belongs to the PTPS family. Homohexamer formed of two homotrimers in a head to head fashion. Zn(2+) is required as a cofactor.

It carries out the reaction 7,8-dihydroneopterin 3'-triphosphate = 6-pyruvoyl-5,6,7,8-tetrahydropterin + triphosphate + H(+). Its pathway is cofactor biosynthesis; tetrahydrobiopterin biosynthesis; tetrahydrobiopterin from 7,8-dihydroneopterin triphosphate: step 1/3. Its function is as follows. Involved in the biosynthesis of tetrahydrobiopterin, an essential cofactor of aromatic amino acid hydroxylases. Catalyzes the transformation of 7,8-dihydroneopterin triphosphate into 6-pyruvoyl tetrahydropterin. This is 6-pyruvoyl tetrahydrobiopterin synthase (ptsA) from Dictyostelium discoideum (Social amoeba).